The primary structure comprises 157 residues: 2-C-methyl-D-erythritol 2,4-cyclodiphosphate synthase (157 aa).

D8 and H10 together coordinate a divalent metal cation. 4-CDP-2-C-methyl-D-erythritol 2-phosphate contacts are provided by residues 8 to 10 and 34 to 35; these read DVH and HS. Position 42 (H42) interacts with a divalent metal cation. 4-CDP-2-C-methyl-D-erythritol 2-phosphate is bound by residues 56–58, 61–65, 132–135, F139, and R142; these read DLG, FPDTD, and TTTE.

It belongs to the IspF family. As to quaternary structure, homotrimer. Requires a divalent metal cation as cofactor.

It carries out the reaction 4-CDP-2-C-methyl-D-erythritol 2-phosphate = 2-C-methyl-D-erythritol 2,4-cyclic diphosphate + CMP. Its pathway is isoprenoid biosynthesis; isopentenyl diphosphate biosynthesis via DXP pathway; isopentenyl diphosphate from 1-deoxy-D-xylulose 5-phosphate: step 4/6. Functionally, involved in the biosynthesis of isopentenyl diphosphate (IPP) and dimethylallyl diphosphate (DMAPP), two major building blocks of isoprenoid compounds. Catalyzes the conversion of 4-diphosphocytidyl-2-C-methyl-D-erythritol 2-phosphate (CDP-ME2P) to 2-C-methyl-D-erythritol 2,4-cyclodiphosphate (ME-CPP) with a corresponding release of cytidine 5-monophosphate (CMP). The polypeptide is 2-C-methyl-D-erythritol 2,4-cyclodiphosphate synthase (Salinibacter ruber (strain DSM 13855 / M31)).